A 461-amino-acid polypeptide reads, in one-letter code: Bifunctional protein GlmU (461 aa).

A pyrophosphorylase region spans residues 1-229; sequence MEKYVVVLAA…FSESLGVNDR (229 aa). Residues 8–11, Lys22, Gln72, and 77–78 contribute to the UDP-N-acetyl-alpha-D-glucosamine site; these read LAAG and GT. Asp102 provides a ligand contact to Mg(2+). The UDP-N-acetyl-alpha-D-glucosamine site is built by Gly139, Glu154, Asn169, and Asn227. Position 227 (Asn227) interacts with Mg(2+). Positions 230-250 are linker; the sequence is VALAQATKTMQRRINEAHMRD. An N-acetyltransferase region spans residues 251–461; sequence GVSFIDPDTA…LPLSKDKDWE (211 aa). Positions 332 and 350 each coordinate UDP-N-acetyl-alpha-D-glucosamine. His362 serves as the catalytic Proton acceptor. The UDP-N-acetyl-alpha-D-glucosamine site is built by Tyr365 and Asn376. Residues 385-386, Ala422, and Arg439 each bind acetyl-CoA; that span reads NY.

The protein in the N-terminal section; belongs to the N-acetylglucosamine-1-phosphate uridyltransferase family. This sequence in the C-terminal section; belongs to the transferase hexapeptide repeat family. Homotrimer. Mg(2+) is required as a cofactor.

It is found in the cytoplasm. The catalysed reaction is alpha-D-glucosamine 1-phosphate + acetyl-CoA = N-acetyl-alpha-D-glucosamine 1-phosphate + CoA + H(+). It carries out the reaction N-acetyl-alpha-D-glucosamine 1-phosphate + UTP + H(+) = UDP-N-acetyl-alpha-D-glucosamine + diphosphate. Its pathway is nucleotide-sugar biosynthesis; UDP-N-acetyl-alpha-D-glucosamine biosynthesis; N-acetyl-alpha-D-glucosamine 1-phosphate from alpha-D-glucosamine 6-phosphate (route II): step 2/2. It functions in the pathway nucleotide-sugar biosynthesis; UDP-N-acetyl-alpha-D-glucosamine biosynthesis; UDP-N-acetyl-alpha-D-glucosamine from N-acetyl-alpha-D-glucosamine 1-phosphate: step 1/1. It participates in bacterial outer membrane biogenesis; LPS lipid A biosynthesis. Its function is as follows. Catalyzes the last two sequential reactions in the de novo biosynthetic pathway for UDP-N-acetylglucosamine (UDP-GlcNAc). The C-terminal domain catalyzes the transfer of acetyl group from acetyl coenzyme A to glucosamine-1-phosphate (GlcN-1-P) to produce N-acetylglucosamine-1-phosphate (GlcNAc-1-P), which is converted into UDP-GlcNAc by the transfer of uridine 5-monophosphate (from uridine 5-triphosphate), a reaction catalyzed by the N-terminal domain. The sequence is that of Bifunctional protein GlmU from Lactobacillus helveticus (strain DPC 4571).